A 432-amino-acid polypeptide reads, in one-letter code: Glutamate-1-semialdehyde 2,1-aminomutase (432 aa).

At Lys-267 the chain carries N6-(pyridoxal phosphate)lysine.

Belongs to the class-III pyridoxal-phosphate-dependent aminotransferase family. HemL subfamily. As to quaternary structure, homodimer. Pyridoxal 5'-phosphate is required as a cofactor.

The protein localises to the cytoplasm. The enzyme catalyses (S)-4-amino-5-oxopentanoate = 5-aminolevulinate. It participates in porphyrin-containing compound metabolism; protoporphyrin-IX biosynthesis; 5-aminolevulinate from L-glutamyl-tRNA(Glu): step 2/2. The chain is Glutamate-1-semialdehyde 2,1-aminomutase from Rhodococcus erythropolis (strain PR4 / NBRC 100887).